We begin with the raw amino-acid sequence, 353 residues long: Small ribosomal subunit biogenesis GTPase RsgA (353 aa).

The tract at residues 1-24 is disordered; that stretch reads MSKNKLSKGQQRRVKANHQRRLKT. Positions 10-23 are enriched in basic residues; sequence QQRRVKANHQRRLK. The 171-residue stretch at 104–274 folds into the CP-type G domain; it reads ASVLTRPDFY…VIDSPGVREF (171 aa). Residues 160–163 and 214–222 each bind GTP; these read NKID and GQSGVGKSS. Zn(2+) contacts are provided by Cys-298, Cys-303, His-305, and Cys-311.

The protein belongs to the TRAFAC class YlqF/YawG GTPase family. RsgA subfamily. In terms of assembly, monomer. Associates with 30S ribosomal subunit, binds 16S rRNA. It depends on Zn(2+) as a cofactor.

The protein localises to the cytoplasm. One of several proteins that assist in the late maturation steps of the functional core of the 30S ribosomal subunit. Helps release RbfA from mature subunits. May play a role in the assembly of ribosomal proteins into the subunit. Circularly permuted GTPase that catalyzes slow GTP hydrolysis, GTPase activity is stimulated by the 30S ribosomal subunit. In Klebsiella pneumoniae subsp. pneumoniae (strain ATCC 700721 / MGH 78578), this protein is Small ribosomal subunit biogenesis GTPase RsgA.